The following is a 307-amino-acid chain: tRNA pseudouridine synthase B (307 aa).

Asp47 acts as the Nucleophile in catalysis.

The protein belongs to the pseudouridine synthase TruB family. Type 1 subfamily.

The enzyme catalyses uridine(55) in tRNA = pseudouridine(55) in tRNA. Functionally, responsible for synthesis of pseudouridine from uracil-55 in the psi GC loop of transfer RNAs. This is tRNA pseudouridine synthase B from Chromohalobacter salexigens (strain ATCC BAA-138 / DSM 3043 / CIP 106854 / NCIMB 13768 / 1H11).